The primary structure comprises 443 residues: MTDPLNPTRLQNHPALARIIESGRTNLPTGITTSGALSAYAQNAAAIIRDNREREKVEIADLNNRLARYVEKVRFLEAQNRVLENDIGVFRNAAHTHSERIAVYFESEKASLFTLVRENKAKISTAEQNIRKLEPDVISAKKNLESSFQLRVQTREDKRSQMKILSNLEAENSYIKRLTTDCEEEKSRVHSEISRLRSDIKRVHALRDKERSKHSSSSQELLKRLNGCISQHDIAIREEISKARRDTTNKNRDYFHNELHAAMKEIRDRFEKDSRAARKTWEDWYHKKITEIKKGSESYSSIQNQAREEILRIRSIVNEFRGKLSDSETINQQLIKRIDDLHFQDKENLRLFEIALNEKENLVIKMREECTKLSVELDKLVENQINLRNEINHYRKLMENAEHLRTTVQTHVTYNAPPPPLPQSGPRTTSYHAYGSAYNDSLL.

The head stretch occupies residues 1 to 58 (MTDPLNPTRLQNHPALARIIESGRTNLPTGITTSGALSAYAQNAAAIIRDNREREKVE). One can recognise an IF rod domain in the interval 55–405 (EKVEIADLNN…KLMENAEHLR (351 aa)). Positions 59–90 (IADLNNRLARYVEKVRFLEAQNRVLENDIGVF) are coil 1A. Positions 91–104 (RNAAHTHSERIAVY) are linker 1. Positions 105 to 239 (FESEKASLFT…SQHDIAIREE (135 aa)) are coil 1B. Residues 240–257 (ISKARRDTTNKNRDYFHN) form a linker 12 region. The coil 2 stretch occupies residues 258-403 (ELHAAMKEIR…YRKLMENAEH (146 aa)). Residues 404-443 (LRTTVQTHVTYNAPPPPLPQSGPRTTSYHAYGSAYNDSLL) are tail.

The protein belongs to the intermediate filament family.

It localises to the cytoplasm. Functionally, cytoplasmic intermediate filaments provide mechanical strength to cells. Not essential protein. This is Intermediate filament protein ifd-2 (ifd-2) from Caenorhabditis elegans.